The chain runs to 86 residues: Large ribosomal subunit protein bL27 (86 aa).

The disordered stretch occupies residues 1-26 (MATKKAGGSSRNGRDSAGRRLGIKKS).

It belongs to the bacterial ribosomal protein bL27 family.

The chain is Large ribosomal subunit protein bL27 from Rickettsia typhi (strain ATCC VR-144 / Wilmington).